The sequence spans 230 residues: Probable C4-dicarboxylate response regulator DctR (230 aa).

Residues 8 to 124 (RVLLIEDDPM…RLKAALTQYE (117 aa)) form the Response regulatory domain. 4-aspartylphosphate is present on aspartate 59. The segment at residues 183 to 209 (EEIGRDVGLARVTVRRYLNYLESVGQV) is a DNA-binding region (H-T-H motif).

In terms of processing, phosphorylated by DctS.

It is found in the cytoplasm. Member of the two-component regulatory system DctS/DctR. Essential for expression of DctP. The polypeptide is Probable C4-dicarboxylate response regulator DctR (dctR) (Halalkalibacterium halodurans (strain ATCC BAA-125 / DSM 18197 / FERM 7344 / JCM 9153 / C-125) (Bacillus halodurans)).